A 936-amino-acid polypeptide reads, in one-letter code: E3 ubiquitin-protein ligase ZNRF3 (936 aa).

The segment at 1–31 is disordered; the sequence is MRPRSGGRPGATGRRRRRLRRRPRGLRCSRL. A signal peptide spans 1-55; sequence MRPRSGGRPGATGRRRRRLRRRPRGLRCSRLPPPPPLPLLLGLLLAAAGPGAARA. Residues 13 to 27 show a composition bias toward basic residues; sequence GRRRRRLRRRPRGLR. Topologically, residues 56–219 are extracellular; that stretch reads KETAFVEVVL…PRQPTEYFDM (164 aa). The helical transmembrane segment at 220-240 threads the bilayer; that stretch reads GIFLAFFVVVSLVCLILLVKI. At 241–936 the chain is on the cytoplasmic side; the sequence is KLKQRRSQNS…HSADSSSPGA (696 aa). The RING-type; atypical zinc finger occupies 293–334; that stretch reads CAICLEKYIDGEELRVIPCTHRFHRKCVDPWLLQHHTCPHCR. Disordered stretches follow at residues 608–693, 739–758, 849–875, and 892–936; these read SEAG…SPGA, LYEG…SQGL, THSL…ATRE, and CPPE…SPGA. Positions 654–684 are enriched in polar residues; that stretch reads SGDQVSTCSLEMNYSSNSSLEHRGPNSSTSE. The segment covering 913–922 has biased composition (low complexity); that stretch reads ESSTTATEAA.

The protein belongs to the ZNRF3 family. In terms of assembly, interacts with LRP6, FZD4, FZD5, FZD6 and FZD8. Interacts with RSPO1; interaction promotes indirect interaction with LGR4 and membrane clearance of ZNRF3. Also interacts with RSPO2. Interacts with LMBR1L.

The protein resides in the cell membrane. The enzyme catalyses S-ubiquitinyl-[E2 ubiquitin-conjugating enzyme]-L-cysteine + [acceptor protein]-L-lysine = [E2 ubiquitin-conjugating enzyme]-L-cysteine + N(6)-ubiquitinyl-[acceptor protein]-L-lysine.. It participates in protein modification; protein ubiquitination. Its activity is regulated as follows. Negatively regulated by R-spondin proteins such as RSPO1: interaction with RSPO1 induces the indirect association between ZNRF3 and LGR4, promoting membrane clearance of ZNRF3. E3 ubiquitin-protein ligase that acts as a negative regulator of the Wnt signaling pathway by mediating the ubiquitination and subsequent degradation of Wnt receptor complex components Frizzled and LRP6. Acts on both canonical and non-canonical Wnt signaling pathway. Acts as a tumor suppressor in the intestinal stem cell zone by inhibiting the Wnt signaling pathway, thereby restricting the size of the intestinal stem cell zone. Along with RSPO2 and RNF43, constitutes a master switch that governs limb specification. In Homo sapiens (Human), this protein is E3 ubiquitin-protein ligase ZNRF3 (ZNRF3).